The following is a 355-amino-acid chain: GTPase Obg (355 aa).

The region spanning Met-1–Leu-159 is the Obg domain. Positions Ala-160–Asp-342 constitute an OBG-type G domain. GTP contacts are provided by residues Gly-166 to Ser-173, Phe-191 to Tyr-195, Asp-213 to Gly-216, Asn-292 to Asp-295, and Ser-323 to Leu-325. Positions 173 and 193 each coordinate Mg(2+).

It belongs to the TRAFAC class OBG-HflX-like GTPase superfamily. OBG GTPase family. In terms of assembly, monomer. The cofactor is Mg(2+).

Its subcellular location is the cytoplasm. Its function is as follows. An essential GTPase which binds GTP, GDP and possibly (p)ppGpp with moderate affinity, with high nucleotide exchange rates and a fairly low GTP hydrolysis rate. Plays a role in control of the cell cycle, stress response, ribosome biogenesis and in those bacteria that undergo differentiation, in morphogenesis control. The chain is GTPase Obg from Xanthomonas axonopodis pv. citri (strain 306).